The primary structure comprises 218 residues: Riboflavin kinase (218 aa).

An N-terminal signal peptide occupies residues 1 to 19 (MFTWTIYVSLLLVLAGTFL). Mg(2+)-binding residues include threonine 72 and asparagine 74. Glutamate 155 (nucleophile) is an active-site residue.

The protein belongs to the flavokinase family. Zn(2+) serves as cofactor. The cofactor is Mg(2+).

It localises to the microsome. The protein resides in the mitochondrion inner membrane. It is found in the endoplasmic reticulum. The catalysed reaction is riboflavin + ATP = FMN + ADP + H(+). It participates in cofactor biosynthesis; FMN biosynthesis; FMN from riboflavin (ATP route): step 1/1. Catalyzes the phosphorylation of riboflavin (vitamin B2) to form flavin mononucleotide (FMN) coenzyme. The chain is Riboflavin kinase (FMN1) from Saccharomyces cerevisiae (strain ATCC 204508 / S288c) (Baker's yeast).